Here is a 425-residue protein sequence, read N- to C-terminus: MNAMLETPELPAVFDGVKLAAVAAVLYVIVRCLNLKSPTAPPDLYFQDSGLSRFLLKSCPLLTKEYIPPLIWGKSGHIQTALYGKMGRVRSPHPYGHRKFITMSDGATSTFDLFEPLAEHCVGDDITMVICPGIANHSEKQYIRTFVDYAQKNGYRCAVLNHLGALPNIELTSPRMFTYGCTWEFGAMVNYIKKTYPLTQLVVVGFSLGGNIVCKYLGETQANQEKVLCCVSVCQGYSALRAQETFMQWDQCRRFYNFLMADNMKKIILSHRQALFGDHVKKPQSLEDTDLSRLYTATSLMQIDDNVMRKFHGYNSLKEYYEEESCMRYLHRIYVPLMLVNAADDPLVHESLLTIPKSLSEKRENVMFVLPLHGGHLGFFEGSVLFPEPLTWMDKLVVEYANAICQWERNKSQCSDTEQVEADLE.

Residues 1–9 (MNAMLETPE) lie on the Cytoplasmic side of the membrane. A helical; Signal-anchor for type II membrane protein transmembrane segment spans residues 10 to 30 (LPAVFDGVKLAAVAAVLYVIV). Residues 31-425 (RCLNLKSPTA…DTEQVEADLE (395 aa)) are Extracellular-facing. The region spanning 128-382 (MVICPGIANH…HGGHLGFFEG (255 aa)) is the AB hydrolase-1 domain. N-linked (GlcNAc...) asparagine glycosylation is present at N136. The active-site Nucleophile is the S207. Residues D345 and H376 each act as charge relay system in the active site. N410 carries N-linked (GlcNAc...) asparagine glycosylation.

It belongs to the AB hydrolase superfamily. AB hydrolase 4 family.

It is found in the cell membrane. The enzyme catalyses Hydrolyzes glycerol monoesters of long-chain fatty acids.. It carries out the reaction an acetyl ester + H2O = an aliphatic alcohol + acetate + H(+). It catalyses the reaction a triacylglycerol + H2O = a diacylglycerol + a fatty acid + H(+). The catalysed reaction is 2-(5Z,8Z,11Z,14Z-eicosatetraenoyl)-glycerol + H2O = glycerol + (5Z,8Z,11Z,14Z)-eicosatetraenoate + H(+). The enzyme catalyses a butanoate ester + H2O = an aliphatic alcohol + butanoate + H(+). It carries out the reaction hexadecanoate ester + H2O = an aliphatic alcohol + hexadecanoate + H(+). With respect to regulation, acylglycerol lipase activity is activated upon binding to progesterone. Progesterone-dependent acylglycerol lipase that catalyzes hydrolysis of endocannabinoid arachidonoylglycerol (AG) from cell membrane. Acts as a progesterone receptor: progesterone-binding activates the acylglycerol lipase activity, mediating degradation of 1-arachidonoylglycerol (1AG) and 2-arachidonoylglycerol (2AG) to glycerol and arachidonic acid (AA). Also displays an ester hydrolase activity against acetyl ester, butanoate ester and hexadecanoate ester. Plays a key role in sperm capacitation in response to progesterone by mediating degradation of 2AG, an inhibitor of the sperm calcium channel CatSper, leading to calcium influx via CatSper and sperm activation. May also play a role in smooth muscle cells migration. This is Monoacylglycerol lipase ABHD2 (ABHD2) from Macaca fascicularis (Crab-eating macaque).